Here is a 318-residue protein sequence, read N- to C-terminus: Protein-L-histidine N-pros-methyltransferase (318 aa).

The signal sequence occupies residues 1–18 (MRLLAGWLCLSLASVWLA). N35 carries N-linked (GlcNAc...) asparagine glycosylation. The S-adenosyl-L-homocysteine site is built by E174, N210, and Y295.

It belongs to the METTL9 family.

It localises to the endoplasmic reticulum. The protein localises to the mitochondrion. The catalysed reaction is L-histidyl-[protein] + S-adenosyl-L-methionine = N(pros)-methyl-L-histidyl-[protein] + S-adenosyl-L-homocysteine + H(+). Protein-histidine N-methyltransferase that specifically catalyzes 1-methylhistidine (pros-methylhistidine) methylation of target proteins. Specifically methylates the second His of proteins with a His-x-His (HxH) motif (where 'x' is preferably a small amino acid), while exploiting the first one as a recognition signature. Catalyzes methylation of target proteins such as S100A9, NDUFB3, SLC39A5, SLC39A7, ARMC6 and DNAJB12; 1-methylhistidine modification may affect the binding of zinc and other metals to its target proteins. Constitutes the main methyltransferase for the 1-methylhistidine modification in cell. The chain is Protein-L-histidine N-pros-methyltransferase from Bos taurus (Bovine).